The sequence spans 330 residues: DNA-directed RNA polymerase subunit alpha (330 aa).

The alpha N-terminal domain (alpha-NTD) stretch occupies residues 1–235 (MQGSVTEFLK…EQLEAFVDLR (235 aa)). The alpha C-terminal domain (alpha-CTD) stretch occupies residues 249–330 (FDPILLRPVD…WPPASIADNE (82 aa)).

This sequence belongs to the RNA polymerase alpha chain family. As to quaternary structure, homodimer. The RNAP catalytic core consists of 2 alpha, 1 beta, 1 beta' and 1 omega subunit. When a sigma factor is associated with the core the holoenzyme is formed, which can initiate transcription.

The catalysed reaction is RNA(n) + a ribonucleoside 5'-triphosphate = RNA(n+1) + diphosphate. Its function is as follows. DNA-dependent RNA polymerase catalyzes the transcription of DNA into RNA using the four ribonucleoside triphosphates as substrates. The chain is DNA-directed RNA polymerase subunit alpha from Yersinia enterocolitica serotype O:8 / biotype 1B (strain NCTC 13174 / 8081).